Consider the following 95-residue polypeptide: MAKNLSAIKRIKTSERNRLINRKYKSVVKTLTKRCLLNIDNLESDNFNDVQSSISQVYSKIDKAVKKGAFHPNTGARKKARLARALSFAQKNRID.

This sequence belongs to the bacterial ribosomal protein bS20 family.

The protein resides in the plastid. Its subcellular location is the chloroplast. Binds directly to 16S ribosomal RNA. This chain is Small ribosomal subunit protein bS20c, found in Pyropia yezoensis (Susabi-nori).